Here is a 476-residue protein sequence, read N- to C-terminus: H2.0-like homeobox protein (476 aa).

Disordered stretches follow at residues 120–169, 328–401, and 413–476; these read QHLP…PSSK, WRHS…HQTT, and TASS…LAGL. Composition is skewed to low complexity over residues 123–134 and 158–168; these read PQQSPTQQQQPQ and HHSGSAPAPSS. Positions 273 to 332 form a DNA-binding region, homeobox; the sequence is RSWSRAVFSNLQRKGLEKRFEIQKYVTKPDRKQLAAMLGLTDAQVKVWFQNRRMKWRHSK. 2 stretches are compositionally biased toward basic and acidic residues: residues 331–346 and 355–368; these read SKEAQAQKDKDKEAGE and EGEREERSPSRSEG. A compositionally biased stretch (acidic residues) spans 369-379; sequence EAESESSDSES. Basic and acidic residues predominate over residues 386 to 397; sequence DTERTEGTERSL. Residues 413 to 434 show a composition bias toward low complexity; the sequence is TASSSTSGSSFSFSSTSSLGSG. Composition is skewed to polar residues over residues 435–446 and 455–467; these read NTHVGSASSLGG and HQPSVTSSPQSPE.

Belongs to the H2.0 homeobox family. Expressed in Th1 cells, CD8-positive T-cells, B-cells and NK cells.

Its subcellular location is the nucleus. Transcription factor required for TBX21/T-bet-dependent maturation of Th1 cells as well as maintenance of Th1-specific gene expression. Involved in embryogenesis and hematopoiesis. The polypeptide is H2.0-like homeobox protein (Hlx) (Mus musculus (Mouse)).